Consider the following 170-residue polypeptide: Adenine phosphoribosyltransferase (170 aa).

The protein belongs to the purine/pyrimidine phosphoribosyltransferase family. Homodimer.

It is found in the cytoplasm. It carries out the reaction AMP + diphosphate = 5-phospho-alpha-D-ribose 1-diphosphate + adenine. It functions in the pathway purine metabolism; AMP biosynthesis via salvage pathway; AMP from adenine: step 1/1. In terms of biological role, catalyzes a salvage reaction resulting in the formation of AMP, that is energically less costly than de novo synthesis. This chain is Adenine phosphoribosyltransferase, found in Trichodesmium erythraeum (strain IMS101).